Reading from the N-terminus, the 358-residue chain is MPFLGQDWRSPGWSWIKTEDGWKRCESCSQKLERENNHCNISHSIILNSEDGEIFNNEEHEYASKKRKKDHFRNDTNTQSFYREKWIYVHKESTKERHGYCTLGEAFNRLDFSSAIQDIRRFNYVVKLLQLIAKSQLTSLSGVAQKNYFNILDKIVQKVLDDHHNPRLIKDLLQDLSSTLCILIRGVGKSVLVGNINIWICRLETILAWQQQLQDLQMTKQVNNGLTLSDLPLHMLNNILYRFSDGWDIITLGQVTPTLYMLSEDRQLWKKLCQYHFAEKQFCRHLILSEKGHIEWKLMYFALQKHYPAKEQYGDTLHFCRHCSILFWKDSGHPCTAADPDSCFTPVSPQHFIDLFKF.

Residues 1–83 (MPFLGQDWRS…NDTNTQSFYR (83 aa)) are interaction with beta-actin. The 49-residue stretch at 226–274 (LTLSDLPLHMLNNILYRFSDGWDIITLGQVTPTLYMLSEDRQLWKKLCQ) folds into the F-box domain.

Part of a SCF (SKP1-cullin-F-box) protein ligase complex consisting of FBXO25, SKP1, CUL1 and RBX1. Interacts directly with SKP1 and CUL1. Interacts (via C-terminus) with beta-actin (via N-terminus).

The protein resides in the nucleus. It participates in protein modification; protein ubiquitination. In terms of biological role, substrate-recognition component of the SCF (SKP1-CUL1-F-box protein)-type E3 ubiquitin ligase complex. May play a role in accumulation of expanded polyglutamine (polyQ) protein huntingtin (HTT). This Macaca fascicularis (Crab-eating macaque) protein is F-box only protein 25 (FBXO25).